A 626-amino-acid chain; its full sequence is DNA mismatch repair protein MutL (626 aa).

It belongs to the DNA mismatch repair MutL/HexB family.

Functionally, this protein is involved in the repair of mismatches in DNA. It is required for dam-dependent methyl-directed DNA mismatch repair. May act as a 'molecular matchmaker', a protein that promotes the formation of a stable complex between two or more DNA-binding proteins in an ATP-dependent manner without itself being part of a final effector complex. The chain is DNA mismatch repair protein MutL from Cellvibrio japonicus (strain Ueda107) (Pseudomonas fluorescens subsp. cellulosa).